A 421-amino-acid chain; its full sequence is Medium-chain specific acyl-CoA dehydrogenase, mitochondrial (421 aa).

Residues 1 to 25 (MAAMFRRSCRVLRSLSHFGWRSQHT) constitute a mitochondrion transit peptide. N6-acetyllysine is present on Lys79. 158 to 167 (YCVTEPGAGS) provides a ligand contact to FAD. Ser167 is a binding site for octanoyl-CoA. An N6-succinyllysine modification is found at Lys179. Residue 191–193 (WIT) coordinates FAD. The residue at position 212 (Lys212) is an N6-acetyllysine; alternate. Residue Lys212 is modified to N6-succinyllysine; alternate. Ser216 serves as a coordination point for octanoyl-CoA. N6-acetyllysine; alternate is present on residues Lys217, Lys259, and Lys271. N6-succinyllysine; alternate is present on residues Lys217, Lys259, and Lys271. Asp278 serves as a coordination point for octanoyl-CoA. At Lys279 the chain carries N6-acetyllysine. Residue Arg281 coordinates octanoyl-CoA. Lys301 is modified (N6-acetyllysine). Residues 306–308 (RKT) and 316–317 (HQ) contribute to the FAD site. Residues Arg349 and Thr351 each contribute to the octanoyl-CoA site. A Phosphothreonine modification is found at Thr351. Residue 374–378 (QVFGG) participates in FAD binding. Glu401 serves as a coordination point for octanoyl-CoA. The active-site Proton acceptor is Glu401. Position 402–405 (402–405 (GTAQ)) interacts with FAD.

The protein belongs to the acyl-CoA dehydrogenase family. In terms of assembly, homotetramer. Interacts with the heterodimeric electron transfer flavoprotein ETF. Requires FAD as cofactor. Post-translationally, acetylated. Could occur at proximity of the cofactor-binding sites and reduce the catalytic activity. Could be deacetylated by SIRT3.

It is found in the mitochondrion matrix. It carries out the reaction a medium-chain 2,3-saturated fatty acyl-CoA + oxidized [electron-transfer flavoprotein] + H(+) = a medium-chain (2E)-enoyl-CoA + reduced [electron-transfer flavoprotein]. The catalysed reaction is pentanoyl-CoA + oxidized [electron-transfer flavoprotein] + H(+) = (2E)-pentenoyl-CoA + reduced [electron-transfer flavoprotein]. The enzyme catalyses hexanoyl-CoA + oxidized [electron-transfer flavoprotein] + H(+) = (2E)-hexenoyl-CoA + reduced [electron-transfer flavoprotein]. It catalyses the reaction octanoyl-CoA + oxidized [electron-transfer flavoprotein] + H(+) = (2E)-octenoyl-CoA + reduced [electron-transfer flavoprotein]. It carries out the reaction decanoyl-CoA + oxidized [electron-transfer flavoprotein] + H(+) = (2E)-decenoyl-CoA + reduced [electron-transfer flavoprotein]. The catalysed reaction is dodecanoyl-CoA + oxidized [electron-transfer flavoprotein] + H(+) = (2E)-dodecenoyl-CoA + reduced [electron-transfer flavoprotein]. The enzyme catalyses tetradecanoyl-CoA + oxidized [electron-transfer flavoprotein] + H(+) = (2E)-tetradecenoyl-CoA + reduced [electron-transfer flavoprotein]. It catalyses the reaction oxidized [electron-transfer flavoprotein] + hexadecanoyl-CoA + H(+) = (2E)-hexadecenoyl-CoA + reduced [electron-transfer flavoprotein]. It functions in the pathway lipid metabolism; mitochondrial fatty acid beta-oxidation. Its function is as follows. Medium-chain specific acyl-CoA dehydrogenase is one of the acyl-CoA dehydrogenases that catalyze the first step of mitochondrial fatty acid beta-oxidation, an aerobic process breaking down fatty acids into acetyl-CoA and allowing the production of energy from fats. The first step of fatty acid beta-oxidation consists in the removal of one hydrogen from C-2 and C-3 of the straight-chain fatty acyl-CoA thioester, resulting in the formation of trans-2-enoyl-CoA. Electron transfer flavoprotein (ETF) is the electron acceptor that transfers electrons to the main mitochondrial respiratory chain via ETF-ubiquinone oxidoreductase (ETF dehydrogenase). Among the different mitochondrial acyl-CoA dehydrogenases, medium-chain specific acyl-CoA dehydrogenase acts specifically on acyl-CoAs with saturated 6 to 12 carbons long primary chains. The protein is Medium-chain specific acyl-CoA dehydrogenase, mitochondrial of Sus scrofa (Pig).